Reading from the N-terminus, the 347-residue chain is MDLQAQLEELKTKTQEALKQLNGDHSKELQELRVAVLGKKGTLTELLKGLKDLSNDLRPVVGKQVNELRDFLTQAFEEQAKVVEAAKIQAKLDSESIDVTLPGRQMKQGYRHVLTQISEEIEDIFLGMGFQIVDGFEVEKDYYNFERMNLPKDHPARDMQDTFYITEDILLRTHTSPVQARTLDQHDFSKGPLKMISPGRVFRRDTDDATHSHQFHQIEGLVVGKSISMGDLKGTLEMIIKKMFGKERKIRLRPSYFPFTEPSVEVDVSCFKCGGKGCNVCKKTGWIEILGAGMVHPSVLEMSGVNAQEYSGFAFGLGQERIAMLRYGINDIRGFYQGDSRFSKQFK.

Position 261 (Glu-261) interacts with Mg(2+).

This sequence belongs to the class-II aminoacyl-tRNA synthetase family. Phe-tRNA synthetase alpha subunit type 1 subfamily. Tetramer of two alpha and two beta subunits. The cofactor is Mg(2+).

It localises to the cytoplasm. It catalyses the reaction tRNA(Phe) + L-phenylalanine + ATP = L-phenylalanyl-tRNA(Phe) + AMP + diphosphate + H(+). The polypeptide is Phenylalanine--tRNA ligase alpha subunit (Streptococcus equi subsp. equi (strain 4047)).